The following is a 322-amino-acid chain: Phosphoserine phosphatase (322 aa).

10 to 12 contacts substrate; the sequence is PED. Mg(2+) contacts are provided by Asp-12, Asp-116, and Asp-118. Asp-116 acts as the Nucleophile in catalysis. Catalysis depends on Asp-118, which acts as the Proton donor. Residues Glu-125, Arg-161, 204–205, and Lys-249 each bind substrate; that span reads SG. Mg(2+) is bound at residue Asp-272. Residue Asn-275 coordinates substrate.

Belongs to the HAD-like hydrolase superfamily. SerB family. Mg(2+) is required as a cofactor.

The catalysed reaction is O-phospho-L-serine + H2O = L-serine + phosphate. It catalyses the reaction O-phospho-D-serine + H2O = D-serine + phosphate. Its pathway is amino-acid biosynthesis; L-serine biosynthesis; L-serine from 3-phospho-D-glycerate: step 3/3. Its function is as follows. Catalyzes the dephosphorylation of phosphoserine (P-Ser). In Escherichia coli O157:H7, this protein is Phosphoserine phosphatase (serB).